The primary structure comprises 248 residues: 4-hydroxy-tetrahydrodipicolinate reductase (248 aa).

NAD(+) contacts are provided by residues Asp32, 74-76, and 99-102; these read GTT and SANF. Catalysis depends on His134, which acts as the Proton donor/acceptor. His135 is a binding site for (S)-2,3,4,5-tetrahydrodipicolinate. Lys138 functions as the Proton donor in the catalytic mechanism. 144–145 is a binding site for (S)-2,3,4,5-tetrahydrodipicolinate; that stretch reads GT.

It belongs to the DapB family.

The protein localises to the cytoplasm. The enzyme catalyses (S)-2,3,4,5-tetrahydrodipicolinate + NAD(+) + H2O = (2S,4S)-4-hydroxy-2,3,4,5-tetrahydrodipicolinate + NADH + H(+). It catalyses the reaction (S)-2,3,4,5-tetrahydrodipicolinate + NADP(+) + H2O = (2S,4S)-4-hydroxy-2,3,4,5-tetrahydrodipicolinate + NADPH + H(+). It functions in the pathway amino-acid biosynthesis; L-lysine biosynthesis via DAP pathway; (S)-tetrahydrodipicolinate from L-aspartate: step 4/4. Its function is as follows. Catalyzes the conversion of 4-hydroxy-tetrahydrodipicolinate (HTPA) to tetrahydrodipicolinate. The sequence is that of 4-hydroxy-tetrahydrodipicolinate reductase from Chlorobium luteolum (strain DSM 273 / BCRC 81028 / 2530) (Pelodictyon luteolum).